The sequence spans 246 residues: Probable aquaporin AqpM (246 aa).

The Cytoplasmic portion of the chain corresponds to 1–12; the sequence is MTMTLAKRFTAE. Residues 13–33 form a helical membrane-spanning segment; sequence VVGTFILVFFGPGAAVITLMI. The Extracellular portion of the chain corresponds to 34 to 56; sequence ANGADKPNEFNIGIGALGGLGDW. A helical membrane pass occupies residues 57–77; the sequence is FAIGMAFALAIAAVIYSLGRI. The Cytoplasmic segment spans residues 78 to 104; it reads SGAHINPAVTIALWSIGRFPGREVVPY. Positions 83 to 85 match the NPA 1 motif; it reads NPA. Residues 105–125 form a helical membrane-spanning segment; the sequence is IVAQFIGAALGSLLFLACVGP. The Extracellular segment spans residues 126–146; that stretch reads AAATVGGLGATAPFPGIGYGQ. The chain crosses the membrane as a helical span at residues 147-167; that stretch reads AILTEAIGTFLLMLVIMGVAV. Residues 168–173 lie on the Cytoplasmic side of the membrane; that stretch reads DERAPP. The helical transmembrane segment at 174 to 194 threads the bilayer; it reads GFAGLVIGLTVGGIITTIGNI. At 195–217 the chain is on the extracellular side; sequence TGSSLNPARTFGPYLGDSLMGIN. Positions 200 to 202 match the NPA 2 motif; that stretch reads NPA. The chain crosses the membrane as a helical span at residues 218-238; sequence LWQYFPIYVIGPIVGAVAAAW. The Cytoplasmic segment spans residues 239–246; it reads LYNYLAKE.

Belongs to the MIP/aquaporin (TC 1.A.8) family.

The protein resides in the cell membrane. Functionally, channel that permits osmotically driven movement of water in both directions. In Archaeoglobus fulgidus (strain ATCC 49558 / DSM 4304 / JCM 9628 / NBRC 100126 / VC-16), this protein is Probable aquaporin AqpM (aqpM).